An 832-amino-acid polypeptide reads, in one-letter code: G-type lectin S-receptor-like serine/threonine-protein kinase RLK1 (832 aa).

The first 24 residues, 1 to 24 (MGSLSCSIIHLVLILQLQTFFVFS), serve as a signal peptide directing secretion. Residues 25-461 (QNIRNGSVPV…VPVTGNRAKK (437 aa)) lie on the Extracellular side of the membrane. 6 N-linked (GlcNAc...) asparagine glycosylation sites follow: asparagine 29, asparagine 92, asparagine 100, asparagine 178, asparagine 240, and asparagine 251. Residues 37–157 (SLTASESQQI…GSEDSDEVLW (121 aa)) enclose the Bulb-type lectin domain. Positions 299 to 349 (RDNMCSPDDALGNMACGYNNICSLGNNKRPKCECPERFVLKDPSNEYGDCL) constitute an EGF-like; atypical domain. 3 cysteine pairs are disulfide-bonded: cysteine 303–cysteine 320, cysteine 314–cysteine 330, and cysteine 332–cysteine 348. A PAN domain is found at 357–446 (CRPENQTANS…DSDTFIKVRN (90 aa)). Asparagine 361 carries N-linked (GlcNAc...) asparagine glycosylation. Cystine bridges form between cysteine 397/cysteine 420 and cysteine 401/cysteine 407. An N-linked (GlcNAc...) asparagine glycan is attached at asparagine 446. A helical transmembrane segment spans residues 462-482 (LDWLIIACSVLLGTSAFVIFD). The Cytoplasmic segment spans residues 483–832 (TSCSYRKTKK…SLSSDPVSLV (350 aa)). The Protein kinase domain maps to 531–803 (RDFTEELGRG…NVTQMLEGVI (273 aa)). Residues 537 to 545 (LGRGAFGIV) and lysine 563 each bind ATP. Residues 622–638 (RRPRPSWEDRKNIAVAI) form a caM-binding region. Aspartate 657 serves as the catalytic Proton acceptor.

The protein belongs to the protein kinase superfamily. Ser/Thr protein kinase family.

It is found in the cell membrane. It catalyses the reaction L-seryl-[protein] + ATP = O-phospho-L-seryl-[protein] + ADP + H(+). It carries out the reaction L-threonyl-[protein] + ATP = O-phospho-L-threonyl-[protein] + ADP + H(+). This is G-type lectin S-receptor-like serine/threonine-protein kinase RLK1 (RLK1) from Arabidopsis thaliana (Mouse-ear cress).